The primary structure comprises 330 residues: Beta-ketoacyl-[acyl-carrier-protein] synthase III (330 aa).

Residues C115 and H255 contribute to the active site. Residues 256–260 form an ACP-binding region; that stretch reads QANFR. Residue N285 is part of the active site.

Belongs to the thiolase-like superfamily. FabH family. Homodimer.

It is found in the cytoplasm. The enzyme catalyses malonyl-[ACP] + acetyl-CoA + H(+) = 3-oxobutanoyl-[ACP] + CO2 + CoA. The protein operates within lipid metabolism; fatty acid biosynthesis. Its function is as follows. Catalyzes the condensation reaction of fatty acid synthesis by the addition to an acyl acceptor of two carbons from malonyl-ACP. Catalyzes the first condensation reaction which initiates fatty acid synthesis and may therefore play a role in governing the total rate of fatty acid production. Possesses both acetoacetyl-ACP synthase and acetyl transacylase activities. Its substrate specificity determines the biosynthesis of branched-chain and/or straight-chain of fatty acids. The polypeptide is Beta-ketoacyl-[acyl-carrier-protein] synthase III (Helicobacter pylori (strain P12)).